The primary structure comprises 428 residues: YTH domain-containing protein ECT1 (428 aa).

The YTH domain maps to Ala245–Phe382. RNA-binding positions include Lys251–Tyr253, Asp257, Trp267–Ser268, Asn300, Trp324, Trp329, and Trp337.

As to quaternary structure, interacts (via C-terminus) with CIPK1. Expressed in root apex, shoot apex, lateral root primordia, stamens, carpels and trichomes.

The protein resides in the nucleus. Its subcellular location is the cytoplasm. In terms of biological role, specifically recognizes and binds N6-methyladenosine (m6A)-containing RNAs, and regulates mRNA stability. M6A is a modification present at internal sites of mRNAs and some non-coding RNAs and plays a role in mRNA stability and processing. The chain is YTH domain-containing protein ECT1 from Arabidopsis thaliana (Mouse-ear cress).